The chain runs to 215 residues: Probable phosphoglycerate mutase GpmB (215 aa).

Substrate is bound by residues 8-15, 21-22, arginine 58, lysine 60, 82-85, 104-105, and 151-152; these read RHGETQWN, QG, ELDM, RR, and GI. Histidine 9 acts as the Tele-phosphohistidine intermediate in catalysis. The active-site Proton donor/acceptor is the glutamate 82.

It belongs to the phosphoglycerate mutase family. GpmB subfamily.

The catalysed reaction is (2R)-2-phosphoglycerate = (2R)-3-phosphoglycerate. It functions in the pathway carbohydrate degradation; glycolysis; pyruvate from D-glyceraldehyde 3-phosphate: step 3/5. This is Probable phosphoglycerate mutase GpmB from Salmonella paratyphi C (strain RKS4594).